The chain runs to 126 residues: Protein ApaG (126 aa).

The ApaG domain occupies 2-126 (SDPRYQVDVS…FRLAVPGALH (125 aa)).

The chain is Protein ApaG from Pseudomonas fluorescens (strain ATCC BAA-477 / NRRL B-23932 / Pf-5).